Consider the following 568-residue polypeptide: Sphingosine-1-phosphate lyase 1 (568 aa).

Over Met1 to Trp40 the chain is Lumenal. The chain crosses the membrane as a helical; Signal-anchor for type III membrane protein span at residues Gln41–Phe61. At Gln62–His568 the chain is on the cytoplasmic side. An N6-(pyridoxal phosphate)lysine; alternate modification is found at Lys353. Lys353 is modified (N6-acetyllysine; alternate). 3'-nitrotyrosine is present on residues Tyr356 and Tyr366. Position 564 is a phosphoserine (Ser564).

This sequence belongs to the group II decarboxylase family. Sphingosine-1-phosphate lyase subfamily. In terms of assembly, homodimer. Requires pyridoxal 5'-phosphate as cofactor. Ubiquitously expressed. Expressed in fetal and adult adrenal gland (at protein level).

It is found in the endoplasmic reticulum membrane. The catalysed reaction is sphinganine 1-phosphate = hexadecanal + phosphoethanolamine. The enzyme catalyses sphing-4-enine 1-phosphate = (2E)-hexadecenal + phosphoethanolamine. Its pathway is lipid metabolism; sphingolipid metabolism. Cleaves phosphorylated sphingoid bases (PSBs), such as sphingosine-1-phosphate, into fatty aldehydes and phosphoethanolamine. Elevates stress-induced ceramide production and apoptosis. Required for global lipid homeostasis in liver and cholesterol homeostasis in fibroblasts. Involved in the regulation of pro-inflammatory response and neutrophil trafficking. Modulates neuronal autophagy via phosphoethanolamine production which regulates accumulation of aggregate-prone proteins such as APP. Seems to play a role in establishing neuronal contact sites and axonal maintenance. This Homo sapiens (Human) protein is Sphingosine-1-phosphate lyase 1.